We begin with the raw amino-acid sequence, 365 residues long: Protein RecA (365 aa).

ATP is bound at residue 73–80; that stretch reads GPESSGKT.

It belongs to the RecA family.

The protein localises to the cytoplasm. Can catalyze the hydrolysis of ATP in the presence of single-stranded DNA, the ATP-dependent uptake of single-stranded DNA by duplex DNA, and the ATP-dependent hybridization of homologous single-stranded DNAs. It interacts with LexA causing its activation and leading to its autocatalytic cleavage. The protein is Protein RecA of Prochlorococcus marinus (strain AS9601).